Reading from the N-terminus, the 346-residue chain is Cytochrome c551 peroxidase (346 aa).

Residues 1 to 23 (MQSSQLLPLGSLLLSFATPLAQA) form the signal peptide. 8 residues coordinate heme c: Cys-74, Cys-77, His-78, Cys-220, Cys-223, His-224, His-284, and Met-298.

It depends on heme c as a cofactor. Post-translationally, binds 2 heme groups per subunit. Sequencing of the whole protein indicates about 20% starts on Val-247.

The protein resides in the periplasm. The catalysed reaction is 2 Fe(II)-[cytochrome c] + H2O2 + 2 H(+) = 2 Fe(III)-[cytochrome c] + 2 H2O. Functionally, catalyzes the peroxidative oxidation of azurin and cytochrome c551. Likely to provide protection against toxic peroxides. The sequence is that of Cytochrome c551 peroxidase (ccpA) from Pseudomonas aeruginosa (strain ATCC 15692 / DSM 22644 / CIP 104116 / JCM 14847 / LMG 12228 / 1C / PRS 101 / PAO1).